Consider the following 299-residue polypeptide: Coenzyme PQQ synthesis protein B (299 aa).

It belongs to the PqqB family.

It participates in cofactor biosynthesis; pyrroloquinoline quinone biosynthesis. In terms of biological role, may be involved in the transport of PQQ or its precursor to the periplasm. In Methylorubrum extorquens (strain ATCC 14718 / DSM 1338 / JCM 2805 / NCIMB 9133 / AM1) (Methylobacterium extorquens), this protein is Coenzyme PQQ synthesis protein B.